Consider the following 310-residue polypeptide: Olfactory receptor 8B8 (310 aa).

The Extracellular portion of the chain corresponds to 1–27; that stretch reads MATENASVPEFILAGLTDQPGLRMPLF. A glycan (N-linked (GlcNAc...) asparagine) is linked at Asn-5. A helical transmembrane segment spans residues 28–48; it reads FLFLGFYMVTMVGNLGLITLI. Topologically, residues 49 to 55 are cytoplasmic; the sequence is GLNSHLH. Residues 56-76 form a helical membrane-spanning segment; sequence TPMYFFLFNLSLIDFCYSTVI. At 77-98 the chain is on the extracellular side; it reads TPKMLVSFVSKKNIISYSGCMT. The cysteines at positions 96 and 188 are disulfide-linked. The helical transmembrane segment at 99–119 threads the bilayer; the sequence is QLFFFLFFVVSESFILSAMAY. Topologically, residues 120–140 are cytoplasmic; it reads DRYVAICNPLMYTVTMSPQVC. A helical transmembrane segment spans residues 141–161; that stretch reads LLLLLGVYVMGFAGAMAHTAF. Over 162 to 195 the chain is Extracellular; sequence MVKLTFCADKLVNHYMCDILPLLERSCTSTYVNE. Residues 196–216 traverse the membrane as a helical segment; the sequence is LVVFIVVGIDIGVPTVTIFIS. The Cytoplasmic segment spans residues 217–238; that stretch reads YALILSSILRISSTEGRSKAFS. A helical membrane pass occupies residues 239 to 259; the sequence is TCSSHIIAVSLFFGSGAFMYL. At 260–270 the chain is on the extracellular side; it reads KPSSLLPMNQG. The chain crosses the membrane as a helical span at residues 271–291; the sequence is KVSSLFYTIVVPMLNPLIYSL. Over 292–310 the chain is Cytoplasmic; that stretch reads RNKDVKVALRKTLSRSSFS.

This sequence belongs to the G-protein coupled receptor 1 family.

It localises to the cell membrane. Odorant receptor. The chain is Olfactory receptor 8B8 from Mus musculus (Mouse).